The chain runs to 454 residues: MCAAQMPPLAHIFRGTFVHSTWTCPMEVLRDHLLGVSDSGKIVFLEEASQQEKLAKEWCFKPCEIRELSHHEFFMPGLVDTHIHASQYSFAGSSIDLPLLEWLTKYTFPAEHRFQNIDFAEEVYTRVVRRTLKNGTTTACYFATIHTDSSLLLADITDKFGQRAFVGKVCMDLNDTFPEYKETTEESIKETERFVSEMLQKNYSRVKPIVTPRFSLSCSETLMGELGNIAKTRDLHIQSHISENRDEVEAVKNLYPSYKNYTSVYDKNNLLTNKTVMAHGCYLSAEELNVFHERGASIAHCPNSNLSLSSGFLNVLEVLKHEVKIGLGTDVAGGYSYSMLDAIRRAVMVSNILLINKVNEKSLTLKEVFRLATLGGSQALGLDGEIGNFEVGKEFDAILINPKASDSPIDLFYGDFFGDISEAVIQKFLYLGDDRNIEEVYVGGKQVVPFSSSV.

Zn(2+) is bound by residues H82 and H84. Substrate contacts are provided by residues 84–87 (HASQ), 213–214 (RF), 240–243 (HISE), and D330. Zn(2+)-binding residues include H240 and D330. S453 carries the post-translational modification Phosphoserine.

This sequence belongs to the metallo-dependent hydrolases superfamily. ATZ/TRZ family. Homodimer. It depends on Zn(2+) as a cofactor.

It catalyses the reaction guanine + H2O + H(+) = xanthine + NH4(+). It functions in the pathway purine metabolism; guanine degradation; xanthine from guanine: step 1/1. Its function is as follows. Catalyzes the hydrolytic deamination of guanine, producing xanthine and ammonia. In Homo sapiens (Human), this protein is Guanine deaminase.